Reading from the N-terminus, the 495-residue chain is Iroquois-class homeodomain protein irx-4-B (495 aa).

The homeobox; TALE-type DNA-binding region spans 141-203 (GSTRRKNATR…NARRRLKKEN (63 aa)). The tract at residues 203–245 (NKMTWPPRNKCSDEKRPYDEEEEEEEDSQKATIKNEKKTVDEE) is disordered. Positions 235–245 (IKNEKKTVDEE) are enriched in basic and acidic residues.

This sequence belongs to the TALE/IRO homeobox family.

It is found in the nucleus. Acts partially redundantly with other irx members in neural patterning. Required for formation of the posterior forebrain, midbrain, hindbrain, and to a lesser extent, spinal cord. Patterns the neuroectoderm in both the anterior/posterior and dorsal/ventral axes. Does not appear to play a role in pronephros kidney development. The polypeptide is Iroquois-class homeodomain protein irx-4-B (irx4-b) (Xenopus laevis (African clawed frog)).